A 386-amino-acid polypeptide reads, in one-letter code: Alanine racemase (386 aa).

The active-site Proton acceptor; specific for D-alanine is the lysine 38. An N6-(pyridoxal phosphate)lysine modification is found at lysine 38. Arginine 136 lines the substrate pocket. The active-site Proton acceptor; specific for L-alanine is the tyrosine 267. Position 315 (methionine 315) interacts with substrate.

The protein belongs to the alanine racemase family. The cofactor is pyridoxal 5'-phosphate.

It catalyses the reaction L-alanine = D-alanine. It participates in amino-acid biosynthesis; D-alanine biosynthesis; D-alanine from L-alanine: step 1/1. In terms of biological role, catalyzes the interconversion of L-alanine and D-alanine. May also act on other amino acids. This chain is Alanine racemase (alr), found in Clostridium perfringens (strain SM101 / Type A).